Here is a 496-residue protein sequence, read N- to C-terminus: Maturase K (496 aa).

This sequence belongs to the intron maturase 2 family. MatK subfamily.

The protein resides in the plastid. It is found in the chloroplast. In terms of biological role, usually encoded in the trnK tRNA gene intron. Probably assists in splicing its own and other chloroplast group II introns. The protein is Maturase K of Paeonia officinalis (Common peony).